Here is a 191-residue protein sequence, read N- to C-terminus: Surfactant protein C (191 aa).

The propeptide occupies Met-1–Arg-23. S-palmitoyl cysteine attachment occurs at residues Cys-28 and Cys-29. Positions His-59–Ile-191 are excised as a propeptide. A BRICHOS domain is found at Phe-94 to Ile-191. Residues Cys-121 and Cys-183 are joined by a disulfide bond.

Its subcellular location is the secreted. It localises to the extracellular space. The protein resides in the surface film. In terms of biological role, pulmonary surfactant associated proteins promote alveolar stability by lowering the surface tension at the air-liquid interface in the peripheral air spaces. The chain is Surfactant protein C (SFTPC) from Macaca mulatta (Rhesus macaque).